The primary structure comprises 487 residues: NADH-quinone oxidoreductase subunit N (487 aa).

The next 13 membrane-spanning stretches (helical) occupy residues 9–29 (PVLPEIFMAVAGLALLMLGVF), 38–58 (VSVLVILALGAAMVLVSSLGG), 73–93 (FAGFAKGLVLVASAIATAMSL), 108–128 (VLVLFATLGMMMMISANDFIA), 161–181 (FVLGSLASGLLLYGISLLYGF), 208–228 (IIAGLVFVLAGLSFKVSAVPF), 240–260 (PTPVTSFFAVAPKIAALCLLV), 277–297 (VVTFIAIGSMFVGSFAAVVQT), 306–326 (SSIGHVGFVLVGIAAGSTLGI), 328–348 (GVLIYLAIYLFMNVGAFAVIL), 374–394 (AFVMAVLMFSMAGVPPLAGFW), 408–430 (LYTLSILGVLSSVVSTYYYLRIV), and 452–472 (LVMAVSTIVILAFTLIPAPLV).

This sequence belongs to the complex I subunit 2 family. NDH-1 is composed of 14 different subunits. Subunits NuoA, H, J, K, L, M, N constitute the membrane sector of the complex.

The protein resides in the cell inner membrane. The catalysed reaction is a quinone + NADH + 5 H(+)(in) = a quinol + NAD(+) + 4 H(+)(out). Functionally, NDH-1 shuttles electrons from NADH, via FMN and iron-sulfur (Fe-S) centers, to quinones in the respiratory chain. The immediate electron acceptor for the enzyme in this species is believed to be ubiquinone. Couples the redox reaction to proton translocation (for every two electrons transferred, four hydrogen ions are translocated across the cytoplasmic membrane), and thus conserves the redox energy in a proton gradient. In Paramagnetospirillum magneticum (strain ATCC 700264 / AMB-1) (Magnetospirillum magneticum), this protein is NADH-quinone oxidoreductase subunit N.